A 209-amino-acid chain; its full sequence is Small ribosomal subunit protein uS3c (209 aa).

A KH type-2 domain is found at 39-109 (IRSCIEKQLH…QIRINLIEIT (71 aa)).

This sequence belongs to the universal ribosomal protein uS3 family. Part of the 30S ribosomal subunit.

The protein resides in the plastid. It is found in the chloroplast. In Gracilaria tenuistipitata (Red alga), this protein is Small ribosomal subunit protein uS3c (rps3).